The following is a 593-amino-acid chain: MQIGKIIKVSGPLVMAENMSEASIQDMCLVGDLGVIGEIIEMRQDVASIQVYEETSGIGPGEPVRSTGEALSVELGPGIISQMFDGIQRPLDTFMEVTQSNFLGRGVQLPALDHEKQWWFEATIEEGTEVSAGDIIGYVDETKIIQHKIMVPNGIKGTVQKIESGSFTIDDPICVIETEQGLKELTMMQKWPVRRGRPIKQKLNPDVPMITGQRVIDTFFPVTKGGAAAVPGPFGAGKTVVQHQIAKWSDVDLVVYVGCGERGNEMTDVVNEFPELIDPNTGESLMERTVLIANTSNMPVAAREASIYTGITIAEYFRDMGYDVAIMADSTSRWAEALREMSGRLEEMPGDEGYPAYLGSRLAEYYERSGRVIALGSDQREGSITAISAVSPSGGDISEPVTQNTLRVVKVFWGLDSSLAQKRHFPSINWIQSYSLYSTEVGRYMDQILQQDWSDMVTEGMRILQEEEQLNEIVRLVGIDSLSDNDRLTLEVAKSIREDYLQQNAFDDVDTFTSREKQFNMLKVILTFGKEARKALSLGAYFNEIMEGTVAVRERISRSKYIPEEELAKISSINEEIKETIQLIVSEGGMTDD.

232 to 239 (GPFGAGKT) lines the ATP pocket.

The protein belongs to the ATPase alpha/beta chains family.

The enzyme catalyses 4 Na(+)(in) + ATP + H2O = 4 Na(+)(out) + ADP + phosphate + H(+). Functionally, involved in ATP-driven sodium extrusion. This Enterococcus hirae (strain ATCC 9790 / DSM 20160 / JCM 8729 / LMG 6399 / NBRC 3181 / NCIMB 6459 / NCDO 1258 / NCTC 12367 / WDCM 00089 / R) protein is V-type sodium ATPase catalytic subunit A (ntpA).